A 283-amino-acid chain; its full sequence is Undecaprenyl-diphosphatase (283 aa).

8 helical membrane-spanning segments follow: residues 4–24, 45–65, 91–111, 118–138, 153–173, 194–214, 228–248, and 258–278; these read LLIL…FLPI, ADLF…YEYW, QLGL…FTLA, LFNP…IFYV, VSLK…IPGT, AEFS…LDLL, ILGV…RWLV, and IFAW…WIFG.

This sequence belongs to the UppP family.

It is found in the cell inner membrane. It catalyses the reaction di-trans,octa-cis-undecaprenyl diphosphate + H2O = di-trans,octa-cis-undecaprenyl phosphate + phosphate + H(+). Catalyzes the dephosphorylation of undecaprenyl diphosphate (UPP). Confers resistance to bacitracin. The sequence is that of Undecaprenyl-diphosphatase from Psychrobacter sp. (strain PRwf-1).